The chain runs to 175 residues: UPF0398 protein SGO_0588 (175 aa).

Belongs to the UPF0398 family.

The protein is UPF0398 protein SGO_0588 of Streptococcus gordonii (strain Challis / ATCC 35105 / BCRC 15272 / CH1 / DL1 / V288).